We begin with the raw amino-acid sequence, 680 residues long: DNA-directed RNA polymerase subunit beta' (680 aa).

Zn(2+) contacts are provided by cysteine 69, cysteine 71, cysteine 87, and cysteine 90. Mg(2+) is bound by residues aspartate 489, aspartate 491, and aspartate 493.

The protein belongs to the RNA polymerase beta' chain family. RpoC1 subfamily. As to quaternary structure, in plastids the minimal PEP RNA polymerase catalytic core is composed of four subunits: alpha, beta, beta', and beta''. When a (nuclear-encoded) sigma factor is associated with the core the holoenzyme is formed, which can initiate transcription. Mg(2+) is required as a cofactor. It depends on Zn(2+) as a cofactor.

Its subcellular location is the plastid. The protein resides in the chloroplast. The enzyme catalyses RNA(n) + a ribonucleoside 5'-triphosphate = RNA(n+1) + diphosphate. Its function is as follows. DNA-dependent RNA polymerase catalyzes the transcription of DNA into RNA using the four ribonucleoside triphosphates as substrates. In Citrus sinensis (Sweet orange), this protein is DNA-directed RNA polymerase subunit beta'.